The following is a 386-amino-acid chain: NADH-ubiquinone oxidoreductase chain 4 (386 aa).

Transmembrane regions (helical) follow at residues 8-28 (SEFHLEWGITLLTLNFSYFLF), 37-57 (WPLSYSTILVSLFVLLWLTFT), 61-81 (FILFYVFFECSLIPTIILILG), 91-111 (ASYYFLFYTLLSSLPLLFIII), 133-153 (IFLLAILSFLVKLPVYFAHIW), 167-187 (MVLAAILLKLGGYGLYLVQVL), 189-209 (IYSETTLMGVCLMGGIFSCLI), 219-239 (LIAYSSVAHMSFVILGMLMSC), 247-267 (ILMMVSHGICSSGLFYLSYLF), 283-303 (ISLFPYLCFWWLSLSFLNMGL), and 315-335 (FFIGAFSLDWMVVGLSGILCF).

Belongs to the complex I subunit 4 family.

It localises to the mitochondrion membrane. The enzyme catalyses a ubiquinone + NADH + 5 H(+)(in) = a ubiquinol + NAD(+) + 4 H(+)(out). Functionally, core subunit of the mitochondrial membrane respiratory chain NADH dehydrogenase (Complex I) that is believed to belong to the minimal assembly required for catalysis. Complex I functions in the transfer of electrons from NADH to the respiratory chain. The immediate electron acceptor for the enzyme is believed to be ubiquinone. This chain is NADH-ubiquinone oxidoreductase chain 4 (ND4), found in Artemia franciscana (Brine shrimp).